Here is a 387-residue protein sequence, read N- to C-terminus: Cytochrome b (387 aa).

8 consecutive transmembrane segments (helical) span residues 32-52, 76-98, 113-133, 179-199, 225-245, 290-310, 325-345, and 353-373; these read FGFF…LLAM, WLLR…VHML, LWVS…LGYV, FFSL…LHII, FTIK…AFVF, LGVL…FLTI, LFWS…QPAA, and LYST…IYMV. Residues H82 and H96 each coordinate heme b. The heme b site is built by H183 and H197.

The protein belongs to the cytochrome b family. The main subunits of complex b-c1 are: cytochrome b, cytochrome c1 and the Rieske protein. The cofactor is heme b.

It localises to the mitochondrion inner membrane. Functionally, component of the ubiquinol-cytochrome c reductase complex (complex III or cytochrome b-c1 complex) that is part of the mitochondrial respiratory chain. The b-c1 complex mediates electron transfer from ubiquinol to cytochrome c. Contributes to the generation of a proton gradient across the mitochondrial membrane that is then used for ATP synthesis. This chain is Cytochrome b (cytB), found in Dictyostelium citrinum (Slime mold).